We begin with the raw amino-acid sequence, 464 residues long: uncharacterized protein (464 aa).

Helical transmembrane passes span 7-27, 37-57, 94-114, 121-141, 153-173, 196-216, 231-251, 282-302, 329-349, 359-379, 401-421, and 432-452; these read VLNV…LRTL, LVFY…LVAA, VVWY…LIAP, FYLL…NCFG, ASIG…VWIF, LSLF…AVHA, FYSA…IVIV, VIAV…IIGP, VAIL…FILL, LSDL…AAAI, MSLI…VGFI, and FLFE…PWLF.

This sequence belongs to the amino acid-polyamine-organocation (APC) superfamily.

The protein localises to the cell membrane. This is an uncharacterized protein from Legionella pneumophila subsp. pneumophila (strain Philadelphia 1 / ATCC 33152 / DSM 7513).